Consider the following 147-residue polypeptide: Hemoglobin subunit epsilon (147 aa).

Residues 3 to 147 (HFTAEEKSVI…VATALAHKYH (145 aa)) enclose the Globin domain. Serine 51 is modified (phosphoserine). Heme b-binding residues include histidine 64 and histidine 93.

The protein belongs to the globin family. As to expression, red blood cells.

In terms of biological role, hemoglobin epsilon chain is a beta-type chain found in early embryos. The polypeptide is Hemoglobin subunit epsilon (HBE1) (Sus scrofa (Pig)).